We begin with the raw amino-acid sequence, 103 residues long: Large ribosomal subunit protein bL21 (103 aa).

This sequence belongs to the bacterial ribosomal protein bL21 family. In terms of assembly, part of the 50S ribosomal subunit. Contacts protein L20.

Its function is as follows. This protein binds to 23S rRNA in the presence of protein L20. This chain is Large ribosomal subunit protein bL21, found in Caldicellulosiruptor saccharolyticus (strain ATCC 43494 / DSM 8903 / Tp8T 6331).